Consider the following 363-residue polypeptide: Carbamoyl phosphate synthase small chain (363 aa).

Residues 1–172 form a CPSase region; it reads MTKRILMLED…AFASPGDGKR (172 aa). Residues serine 46, glycine 220, and glycine 222 each coordinate L-glutamine. One can recognise a Glutamine amidotransferase type-1 domain in the interval 172–359; sequence RVVLVDYGVK…MEMMNGKEEG (188 aa). Cysteine 247 acts as the Nucleophile in catalysis. Residues leucine 248, glutamine 251, asparagine 289, glycine 291, and tyrosine 292 each coordinate L-glutamine. Active-site residues include histidine 332 and glutamate 334.

It belongs to the CarA family. In terms of assembly, composed of two chains; the small (or glutamine) chain promotes the hydrolysis of glutamine to ammonia, which is used by the large (or ammonia) chain to synthesize carbamoyl phosphate. Tetramer of heterodimers (alpha,beta)4.

It carries out the reaction hydrogencarbonate + L-glutamine + 2 ATP + H2O = carbamoyl phosphate + L-glutamate + 2 ADP + phosphate + 2 H(+). The enzyme catalyses L-glutamine + H2O = L-glutamate + NH4(+). The protein operates within amino-acid biosynthesis; L-arginine biosynthesis; carbamoyl phosphate from bicarbonate: step 1/1. Its pathway is pyrimidine metabolism; UMP biosynthesis via de novo pathway; (S)-dihydroorotate from bicarbonate: step 1/3. In terms of biological role, small subunit of the glutamine-dependent carbamoyl phosphate synthetase (CPSase). CPSase catalyzes the formation of carbamoyl phosphate from the ammonia moiety of glutamine, carbonate, and phosphate donated by ATP, constituting the first step of 2 biosynthetic pathways, one leading to arginine and/or urea and the other to pyrimidine nucleotides. The small subunit (glutamine amidotransferase) binds and cleaves glutamine to supply the large subunit with the substrate ammonia. This is Carbamoyl phosphate synthase small chain from Listeria monocytogenes serovar 1/2a (strain ATCC BAA-679 / EGD-e).